Reading from the N-terminus, the 221-residue chain is Translation initiation factor 6 (221 aa).

This sequence belongs to the eIF-6 family.

In terms of biological role, binds to the 50S ribosomal subunit and prevents its association with the 30S ribosomal subunit to form the 70S initiation complex. The polypeptide is Translation initiation factor 6 (Methanosphaerula palustris (strain ATCC BAA-1556 / DSM 19958 / E1-9c)).